The primary structure comprises 276 residues: NAD-capped RNA hydrolase NudC (276 aa).

Substrate is bound at residue arginine 82. Residues cysteine 112 and cysteine 115 each contribute to the Zn(2+) site. Substrate is bound at residue glutamate 125. Zn(2+)-binding residues include cysteine 130 and cysteine 133. Residue tyrosine 138 participates in substrate binding. Residues 139–262 (PRISPSMIVL…SIARYLIDLY (124 aa)) form the Nudix hydrolase domain. The a divalent metal cation site is built by alanine 172, glutamate 188, and glutamate 192. Positions 173 to 194 (GFAEPGESAEECLVREVREEVA) match the Nudix box motif. 206–213 (QCWPFPHS) contacts substrate. Glutamate 233 contributes to the a divalent metal cation binding site. Alanine 255 lines the substrate pocket.

This sequence belongs to the Nudix hydrolase family. NudC subfamily. In terms of assembly, homodimer. The cofactor is Mg(2+). Mn(2+) is required as a cofactor. Requires Zn(2+) as cofactor.

It catalyses the reaction a 5'-end NAD(+)-phospho-ribonucleoside in mRNA + H2O = a 5'-end phospho-adenosine-phospho-ribonucleoside in mRNA + beta-nicotinamide D-ribonucleotide + 2 H(+). The catalysed reaction is NAD(+) + H2O = beta-nicotinamide D-ribonucleotide + AMP + 2 H(+). It carries out the reaction NADH + H2O = reduced beta-nicotinamide D-ribonucleotide + AMP + 2 H(+). In terms of biological role, mRNA decapping enzyme that specifically removes the nicotinamide adenine dinucleotide (NAD) cap from a subset of mRNAs by hydrolyzing the diphosphate linkage to produce nicotinamide mononucleotide (NMN) and 5' monophosphate mRNA. The NAD-cap is present at the 5'-end of some mRNAs and stabilizes RNA against 5'-processing. Has preference for mRNAs with a 5'-end purine. Catalyzes the hydrolysis of a broad range of dinucleotide pyrophosphates. This Pseudomonas entomophila (strain L48) protein is NAD-capped RNA hydrolase NudC.